Consider the following 1807-residue polypeptide: Integrin beta-4 (1807 aa).

The first 27 residues, 1 to 27, serve as a signal peptide directing secretion; it reads MAGLCSSPWVKLLLAVVLSAGLPGNMA. Topologically, residues 28–713 are extracellular; that stretch reads NRCKKAQVKS…KKKDCLPAPS (686 aa). A PSI domain is found at 29-73; sequence RCKKAQVKSCTECIRVDKSCAYCTDELFKERRCNTQADVLAAGCR. 8 disulfides stabilise this stretch: Cys30–Cys48, Cys38–Cys456, Cys41–Cys61, Cys51–Cys72, Cys245–Cys288, Cys458–Cys477, Cys469–Cys480, and Cys482–Cys491. The 210-residue stretch at 131-340 folds into the VWFA domain; that stretch reads DLYILMDFSN…SYYEKLHKYF (210 aa). Residues Ser139 and Ser141 each contribute to the Mg(2+) site. Residues Ser141, Asp144, Asp145, and Asp176 each contribute to the Ca(2+) site. The involved in NRG1- and IGF1-binding stretch occupies residues 194 to 199; the sequence is WPNSDP. Asn228, Asp230, Pro232, and Glu233 together coordinate Ca(2+). Residue Glu233 coordinates Mg(2+). A glycan (N-linked (GlcNAc...) asparagine) is linked at Asn327. Residue Glu350 coordinates Ca(2+). I-EGF domains lie at 458-492, 493-538, 539-575, and 576-617; these read CELQ…KTCN, CSTG…HFCE, YDNF…RSCD, and CPLS…TTCE. N-linked (GlcNAc...) asparagine glycosylation occurs at Asn492. 11 disulfides stabilise this stretch: Cys493–Cys521, Cys504–Cys519, Cys513–Cys524, Cys526–Cys537, Cys544–Cys558, Cys552–Cys563, Cys565–Cys574, Cys576–Cys599, Cys583–Cys597, Cys591–Cys602, and Cys604–Cys616. Asn580 carries N-linked (GlcNAc...) asparagine glycosylation. N-linked (GlcNAc...) asparagine glycosylation is present at Asn619. 4 cysteine pairs are disulfide-bonded: Cys628/Cys673, Cys634/Cys653, Cys637/Cys650, and Cys682/Cys708. Residue Asn697 is glycosylated (N-linked (GlcNAc...) asparagine). Residues 714–734 traverse the membrane as a helical segment; sequence WWLIPLLIFLLLLLVLLLLLC. Positions 734 to 751 are palmitoylated on several cysteines; the sequence is CWKYCACCKACLGLLPCC. Residues 735–1807 lie on the Cytoplasmic side of the membrane; it reads WKYCACCKAC…THMDQQFFQT (1073 aa). Ser773, Ser1071, and Ser1121 each carry phosphoserine. The Calx-beta domain occupies 981 to 1086; the sequence is VNITIIKEQA…QVRRFQVQLS (106 aa). A disordered region spans residues 1119-1141; that stretch reads SASPPLPRGDLGAPQNPNAKAAG. Fibronectin type-III domains follow at residues 1131–1220 and 1224–1323; these read APQN…THQE and EPGR…TQPK. Ser1386, Ser1389, and Ser1405 each carry phosphoserine. Thr1418 bears the Phosphothreonine mark. Ser1425 bears the Phosphoserine mark. Thr1514 is subject to Phosphothreonine. Fibronectin type-III domains follow at residues 1514 to 1609 and 1627 to 1723; these read TPTR…VHPQ and APGP…SQDG. Ser1776 carries the phosphoserine modification.

The protein belongs to the integrin beta chain family. Heterodimer of an alpha and a beta subunit. Beta-4 associates with alpha-6. Interacts (via cytoplasmic region) with COL17A1 (via cytoplasmic region). Interacts (via cytoplasmic region) with DST isoform 3 (via N-terminus). Interacts (via cytoplasmic domain) with DST (via N-terminus). Interacts with RAC1. ITGA6:ITGB4 is found in a ternary complex with NRG1 and ERBB3. ITGA6:ITGB4 is found in a ternary complex with IGF1 and IGF1R. ITGA6:ITGB4 interacts with IGF2. Interacts with TMEM268; this interaction prevents ITGB4 degradation. In terms of processing, palmitoylated by DHHC3 at several cysteines of the membrane-proximal region, enhancing stability and cell surface expression. Palmitoylation also promotes secondary association with tertaspanins.

It localises to the cell membrane. It is found in the cell junction. Its subcellular location is the hemidesmosome. Functionally, integrin alpha-6/beta-4 is a receptor for laminin. It plays a critical structural role in the hemidesmosome of epithelial cells. Is required for the regulation of keratinocyte polarity and motility. ITGA6:ITGB4 binds to NRG1 (via EGF domain) and this binding is essential for NRG1-ERBB signaling. ITGA6:ITGB4 binds to IGF1 and this binding is essential for IGF1 signaling. ITGA6:ITGB4 binds to IGF2 and this binding is essential for IGF2 signaling. This is Integrin beta-4 (Itgb4) from Rattus norvegicus (Rat).